A 628-amino-acid polypeptide reads, in one-letter code: Probable potassium transport system protein Kup (628 aa).

Helical transmembrane passes span 56–76 (ILSLVVWTLTVIVSLKYVLLI), 109–129 (LILGVFGTAIFFGDGVITPAI), 141–161 (AAPGLHRYVVPVTLVVLTLLF), 174–194 (FFGPVTAVWFIVLALLGVVHI), 209–229 (ALAFMWQHPGTAFVSLGAVVL), 253–273 (WFSLVMPALMINYFGQGAMLL), 295–315 (LIVLATLATVIASQALITAAF), 343–363 (IYVPFVNWGLYACIVLAVVTF), 372–392 (AYGIAVTTDMLITTTMTFFVI), 400–420 (WALCVAATGFFFLVDAMFFAA), and 425–445 (ILDGGWFPLAIGAAMFTLMMT).

The protein belongs to the HAK/KUP transporter (TC 2.A.72) family.

It localises to the cell inner membrane. It catalyses the reaction K(+)(in) + H(+)(in) = K(+)(out) + H(+)(out). Functionally, transport of potassium into the cell. Likely operates as a K(+):H(+) symporter. This is Probable potassium transport system protein Kup from Methylibium petroleiphilum (strain ATCC BAA-1232 / LMG 22953 / PM1).